The chain runs to 126 residues: Protein ApaG (126 aa).

Residues 2–126 form the ApaG domain; the sequence is SDPRYQIDVS…FRLAVPGALH (125 aa).

This is Protein ApaG from Azotobacter vinelandii (strain DJ / ATCC BAA-1303).